A 30-amino-acid chain; its full sequence is Cycloviolacin-O4 (30 aa).

Positions 1 to 30 (GIPCGESCVWIPCISSAIGCSCKNKVCYRN) form a cross-link, cyclopeptide (Gly-Asn). 3 disulfide bridges follow: cysteine 4–cysteine 20, cysteine 8–cysteine 22, and cysteine 13–cysteine 27.

In terms of processing, this is a cyclic peptide. Expressed in petals, petioles, roots and runners but not in leaves (at protein level).

Functionally, probably participates in a plant defense mechanism. The polypeptide is Cycloviolacin-O4 (Viola odorata (Sweet violet)).